Consider the following 473-residue polypeptide: MNVGRVVQVIGVVVDVEFEPGKVPPIYNALKIRSEDQDTPTEVPINLTLEVAQHLGNNRVRAVAMSSTDGLVRGMKVVDTGAPITVPVGRPVLGRLLNVLGEPIDGKGPVESDHYYPIHRPAPPLEEQSTRAEILETGIKVIDLLVPFLKGGKIGLFGGAGVGKTVIVMELINNIAKQHGGISVFAGVGERTREGNDLYHEMKEAGVLDKTIMVFGQMNEPPGVRLRVGLTGLTMAEYFRDEEGQDVLLFIDNIFRFTQAGSEVSALLGRMPSAVGYQPTLATEMGQLQERITSTRKGSITSVQAVYVPADDLTDPAPATTFAHLDATVVLSRQIAELGIYPAVDPLDSTSRILDPHIVGEEHYQVARGVQRVLQRYKELQDIIAILGMDELSDEDKLIVARARKLQRFLSQPFTVAEAFTGRPGKYVPVKETIRGFKEILEGKHDDIPETCFYMAGTIDEVVERARELEGSA.

An ATP-binding site is contributed by 158–165; it reads GGAGVGKT.

This sequence belongs to the ATPase alpha/beta chains family. As to quaternary structure, F-type ATPases have 2 components, CF(1) - the catalytic core - and CF(0) - the membrane proton channel. CF(1) has five subunits: alpha(3), beta(3), gamma(1), delta(1), epsilon(1). CF(0) has three main subunits: a(1), b(2) and c(9-12). The alpha and beta chains form an alternating ring which encloses part of the gamma chain. CF(1) is attached to CF(0) by a central stalk formed by the gamma and epsilon chains, while a peripheral stalk is formed by the delta and b chains.

The protein localises to the cell membrane. The catalysed reaction is ATP + H2O + 4 H(+)(in) = ADP + phosphate + 5 H(+)(out). Its function is as follows. Produces ATP from ADP in the presence of a proton gradient across the membrane. The catalytic sites are hosted primarily by the beta subunits. This chain is ATP synthase subunit beta, found in Carboxydothermus hydrogenoformans (strain ATCC BAA-161 / DSM 6008 / Z-2901).